Here is a 424-residue protein sequence, read N- to C-terminus: Serine--tRNA ligase (424 aa).

230 to 232 contacts L-serine; that stretch reads TAE. 261 to 263 is a binding site for ATP; it reads RSE. Glutamate 284 contributes to the L-serine binding site. An ATP-binding site is contributed by 348–351; it reads EISS. Serine 384 is a binding site for L-serine.

The protein belongs to the class-II aminoacyl-tRNA synthetase family. Type-1 seryl-tRNA synthetase subfamily. As to quaternary structure, homodimer. The tRNA molecule binds across the dimer.

The protein localises to the cytoplasm. The enzyme catalyses tRNA(Ser) + L-serine + ATP = L-seryl-tRNA(Ser) + AMP + diphosphate + H(+). It catalyses the reaction tRNA(Sec) + L-serine + ATP = L-seryl-tRNA(Sec) + AMP + diphosphate + H(+). It participates in aminoacyl-tRNA biosynthesis; selenocysteinyl-tRNA(Sec) biosynthesis; L-seryl-tRNA(Sec) from L-serine and tRNA(Sec): step 1/1. Catalyzes the attachment of serine to tRNA(Ser). Is also able to aminoacylate tRNA(Sec) with serine, to form the misacylated tRNA L-seryl-tRNA(Sec), which will be further converted into selenocysteinyl-tRNA(Sec). In Streptococcus pneumoniae (strain JJA), this protein is Serine--tRNA ligase.